The primary structure comprises 166 residues: uncharacterized protein (166 aa).

Residues 25 to 116 (PEEPPLWVPP…QGADEVHSQH (92 aa)) form a disordered region. Serine 105 carries the phosphoserine modification.

This is an uncharacterized protein from Rattus norvegicus (Rat).